Reading from the N-terminus, the 114-residue chain is Large ribosomal subunit protein bL19 (114 aa).

This sequence belongs to the bacterial ribosomal protein bL19 family.

Functionally, this protein is located at the 30S-50S ribosomal subunit interface and may play a role in the structure and function of the aminoacyl-tRNA binding site. The polypeptide is Large ribosomal subunit protein bL19 (rplS) (Listeria monocytogenes serovar 1/2a (strain ATCC BAA-679 / EGD-e)).